Consider the following 161-residue polypeptide: Cyclic pyranopterin monophosphate synthase (161 aa).

Residues 75 to 77 (MCH) and 115 to 116 (ME) each bind substrate. The active site involves Asp-130.

The protein belongs to the MoaC family. Homohexamer; trimer of dimers.

The enzyme catalyses (8S)-3',8-cyclo-7,8-dihydroguanosine 5'-triphosphate = cyclic pyranopterin phosphate + diphosphate. It functions in the pathway cofactor biosynthesis; molybdopterin biosynthesis. Functionally, catalyzes the conversion of (8S)-3',8-cyclo-7,8-dihydroguanosine 5'-triphosphate to cyclic pyranopterin monophosphate (cPMP). The protein is Cyclic pyranopterin monophosphate synthase of Bacillus cereus (strain 03BB102).